A 141-amino-acid polypeptide reads, in one-letter code: Mitochondrial import inner membrane translocase subunit tim16 (141 aa).

Residues 59-117 (EACKILNVNKPADGTAANMEEVMERFKRLFDANDPEKGGSFYLQSKVVRARERLEAEIK) are J-like. Residues 119–141 (KMEEKQAEEEVKEGWNPKIYKDR) form a disordered region.

This sequence belongs to the TIM16/PAM16 family. Heterodimer with tim14/pam18. Component of the PAM complex, at least composed of hsp70-5/ssc1, grpe/mge1, tim44, un-4/pam16, pam17 and tim14/pam18.

The protein localises to the mitochondrion inner membrane. In terms of biological role, essential component of the PAM complex, a complex required for the translocation of transit peptide-containing proteins from the inner membrane into the mitochondrial matrix in an ATP-dependent manner. In the complex, it is required to regulate activity of mtHSP70 (hsp70-5) via its interaction with tim14/pam18. May act by positioning tim14/pam18 in juxtaposition to mtHSP70 at the translocon to maximize ATPase stimulation. In Neurospora crassa (strain ATCC 24698 / 74-OR23-1A / CBS 708.71 / DSM 1257 / FGSC 987), this protein is Mitochondrial import inner membrane translocase subunit tim16 (un-4).